Consider the following 323-residue polypeptide: Cytosolic sulfotransferase 5 (323 aa).

Residue 69-74 (KCGTTW) coordinates 3'-phosphoadenylyl sulfate. H135 functions as the Proton acceptor in the catalytic mechanism. 3'-phosphoadenylyl sulfate is bound by residues R157, S165, and 289 to 291 (RKG).

The protein belongs to the sulfotransferase 1 family. As to expression, expressed in inflorescence stems, roots and siliques.

It localises to the cytoplasm. Sulfotransferase that utilizes 3'-phospho-5'-adenylyl sulfate (PAPS) as sulfonate donor to specifically catalyze the sulfate conjugation of flavones and flavonols. Strictly specific for the position 7. Substrate preference is kaempferol 3-sulfate &gt; isorhamnetin &gt; kaempferol. This is Cytosolic sulfotransferase 5 (SOT5) from Arabidopsis thaliana (Mouse-ear cress).